A 346-amino-acid chain; its full sequence is tRNA N6-adenosine threonylcarbamoyltransferase (346 aa).

H111 and H115 together coordinate Fe cation. Residues 134-138 (LVSGG), D167, G180, and N277 each bind substrate. D305 contributes to the Fe cation binding site.

This sequence belongs to the KAE1 / TsaD family. Fe(2+) serves as cofactor.

The protein localises to the cytoplasm. The catalysed reaction is L-threonylcarbamoyladenylate + adenosine(37) in tRNA = N(6)-L-threonylcarbamoyladenosine(37) in tRNA + AMP + H(+). Its function is as follows. Required for the formation of a threonylcarbamoyl group on adenosine at position 37 (t(6)A37) in tRNAs that read codons beginning with adenine. Is involved in the transfer of the threonylcarbamoyl moiety of threonylcarbamoyl-AMP (TC-AMP) to the N6 group of A37, together with TsaE and TsaB. TsaD likely plays a direct catalytic role in this reaction. This chain is tRNA N6-adenosine threonylcarbamoyltransferase, found in Bordetella pertussis (strain Tohama I / ATCC BAA-589 / NCTC 13251).